Reading from the N-terminus, the 38-residue chain is Photosystem I reaction center subunit IX (38 aa).

The chain crosses the membrane as a helical span at residues 6–26; the sequence is YLSTAPVVATLWLFLTAGILI.

Belongs to the PsaJ family.

Its subcellular location is the plastid. It localises to the chloroplast thylakoid membrane. Functionally, may help in the organization of the PsaE and PsaF subunits. In Cyanidioschyzon merolae (strain NIES-3377 / 10D) (Unicellular red alga), this protein is Photosystem I reaction center subunit IX.